The sequence spans 186 residues: Dynactin subunit 3 (186 aa).

At Ala2 the chain carries N-acetylalanine. Residues 135-157 (QQQDQCVEITEESKALLEEYNKT) adopt a coiled-coil conformation.

The protein belongs to the dynactin subunit 3 family. Subunit of dynactin, a multiprotein complex part of a tripartite complex with dynein and a adapter, such as BICDL1, BICD2 or HOOK3. The dynactin complex is built around ACTR1A/ACTB filament and consists of an actin-related filament composed of a shoulder domain, a pointed end and a barbed end. Its length is defined by its flexible shoulder domain. The soulder is composed of 2 DCTN1 subunits, 4 DCTN2 and 2 DCTN3. The 4 DCNT2 (via N-terminus) bind the ACTR1A filament and act as molecular rulers to determine the length. The pointed end is important for binding dynein-dynactin cargo adapters. Consists of 4 subunits: ACTR10, DCNT4, DCTN5 and DCTN6. The barbed end is composed of a CAPZA1:CAPZB heterodimers, which binds ACTR1A/ACTB filament and dynactin and stabilizes dynactin. As to expression, ubiquitously expressed. Highly expressed in muscle and pancreas and detected at lower levels in brain.

The protein localises to the cytoplasm. Its subcellular location is the cytoskeleton. It is found in the microtubule organizing center. The protein resides in the centrosome. It localises to the chromosome. The protein localises to the centromere. Its subcellular location is the kinetochore. It is found in the spindle. The protein resides in the cleavage furrow. It localises to the midbody. Functionally, part of the dynactin complex that activates the molecular motor dynein for ultra-processive transport along microtubules. Together with dynein may be involved in spindle assembly and cytokinesis. The chain is Dynactin subunit 3 from Homo sapiens (Human).